Reading from the N-terminus, the 399-residue chain is S-adenosylmethionine synthase (399 aa).

His17 provides a ligand contact to ATP. Asp19 lines the Mg(2+) pocket. A K(+)-binding site is contributed by Glu45. L-methionine contacts are provided by Glu58 and Gln101. The flexible loop stretch occupies residues Gln101–Gln111. Residues Asp177 to Lys179, Arg244 to Phe245, Asp253, Arg259 to Lys260, Ala276, and Lys280 each bind ATP. Asp253 is a binding site for L-methionine. L-methionine is bound at residue Lys284.

This sequence belongs to the AdoMet synthase family. In terms of assembly, homotetramer; dimer of dimers. Requires Mg(2+) as cofactor. K(+) serves as cofactor.

It localises to the cytoplasm. It catalyses the reaction L-methionine + ATP + H2O = S-adenosyl-L-methionine + phosphate + diphosphate. Its pathway is amino-acid biosynthesis; S-adenosyl-L-methionine biosynthesis; S-adenosyl-L-methionine from L-methionine: step 1/1. Catalyzes the formation of S-adenosylmethionine (AdoMet) from methionine and ATP. The overall synthetic reaction is composed of two sequential steps, AdoMet formation and the subsequent tripolyphosphate hydrolysis which occurs prior to release of AdoMet from the enzyme. In Bacillus cereus (strain B4264), this protein is S-adenosylmethionine synthase.